The chain runs to 335 residues: POU domain, class 5, transcription factor 2 (335 aa).

Positions 1–23 are disordered; sequence MAGRRSSNVCPFPGNSGGGLEGP. The 75-residue stretch at 113–187 folds into the POU-specific domain; it reads DVSAIQKEME…LLKMWLEEVD (75 aa). Residues 205 to 264 constitute a DNA-binding region (homeobox); that stretch reads RKRRRASRERRIGSNLEKLFLQCPEPTPQQISYIAGRLRLQKDLVQVWFSNRSQMAGWPT.

Belongs to the POU transcription factor family. Class-5 subfamily. As to expression, highly restricted to adult testis.

The protein resides in the nucleus. Transcription factor that binds preferentially to the octamer motif (5'-ATGTTAAT-3'). May exert a regulatory function in meiotic events that are required for terminal differentiation of male germ cell. The sequence is that of POU domain, class 5, transcription factor 2 (Pou5f2) from Rattus norvegicus (Rat).